We begin with the raw amino-acid sequence, 230 residues long: Nicotinamide riboside kinase (230 aa).

Residue 12–20 (GASCSGKST) participates in ATP binding. Mg(2+) contacts are provided by S19 and D38. The active-site Proton acceptor is the D38. Substrate contacts are provided by residues 38 to 41 (DDFY) and 56 to 57 (WD). R153 serves as a coordination point for ATP. Substrate-binding positions include R154 and 159 to 160 (GY). ATP-binding positions include 157-159 (RTG) and 203-205 (RIQ).

This sequence belongs to the uridine kinase family. NRK subfamily.

The enzyme catalyses beta-nicotinamide D-riboside + ATP = beta-nicotinamide D-ribonucleotide + ADP + H(+). It carries out the reaction beta-D-ribosylnicotinate + ATP = nicotinate beta-D-ribonucleotide + ADP + H(+). The protein operates within cofactor biosynthesis; NAD(+) biosynthesis. Its function is as follows. Catalyzes the phosphorylation of nicotinamide riboside (NR) and nicotinic acid riboside (NaR) to form nicotinamide mononucleotide (NMN) and nicotinic acid mononucleotide (NaMN). The polypeptide is Nicotinamide riboside kinase (nrk1) (Schizosaccharomyces pombe (strain 972 / ATCC 24843) (Fission yeast)).